A 172-amino-acid chain; its full sequence is Ribosome maturation factor RimM (172 aa).

The 75-residue stretch at 96–170 folds into the PRC barrel domain; sequence EENEFYFHEI…KITIEVMEGL (75 aa).

Belongs to the RimM family. Binds ribosomal protein uS19.

It localises to the cytoplasm. In terms of biological role, an accessory protein needed during the final step in the assembly of 30S ribosomal subunit, possibly for assembly of the head region. Essential for efficient processing of 16S rRNA. May be needed both before and after RbfA during the maturation of 16S rRNA. It has affinity for free ribosomal 30S subunits but not for 70S ribosomes. This chain is Ribosome maturation factor RimM, found in Listeria monocytogenes serotype 4b (strain CLIP80459).